Consider the following 231-residue polypeptide: Large ribosomal subunit protein uL1 (231 aa).

The protein belongs to the universal ribosomal protein uL1 family. Part of the 50S ribosomal subunit.

Its function is as follows. Binds directly to 23S rRNA. The L1 stalk is quite mobile in the ribosome, and is involved in E site tRNA release. Functionally, protein L1 is also a translational repressor protein, it controls the translation of the L11 operon by binding to its mRNA. This Staphylococcus carnosus (strain TM300) protein is Large ribosomal subunit protein uL1.